The primary structure comprises 206 residues: Protein GrpE (206 aa).

Over residues 1-18 (MNNEDKKLQDEQLQKETV) the composition is skewed to basic and acidic residues. Positions 1 to 21 (MNNEDKKLQDEQLQKETVEAA) are disordered.

It belongs to the GrpE family. As to quaternary structure, homodimer.

It localises to the cytoplasm. Participates actively in the response to hyperosmotic and heat shock by preventing the aggregation of stress-denatured proteins, in association with DnaK and GrpE. It is the nucleotide exchange factor for DnaK and may function as a thermosensor. Unfolded proteins bind initially to DnaJ; upon interaction with the DnaJ-bound protein, DnaK hydrolyzes its bound ATP, resulting in the formation of a stable complex. GrpE releases ADP from DnaK; ATP binding to DnaK triggers the release of the substrate protein, thus completing the reaction cycle. Several rounds of ATP-dependent interactions between DnaJ, DnaK and GrpE are required for fully efficient folding. In Photobacterium profundum (strain SS9), this protein is Protein GrpE.